Reading from the N-terminus, the 1055-residue chain is Kinesin-like protein KIN-7D, mitochondrial (1055 aa).

Positions 1–23 are enriched in low complexity; that stretch reads MASSSSRTRSSRPPSPASSTSSS. A disordered region spans residues 1–36; sequence MASSSSRTRSSRPPSPASSTSSSHLSNRLIPRSNST. The transit peptide at 1-96 directs the protein to the mitochondrion; sequence MASSSSRTRS…PMDDTISSER (96 aa). Residues 98–415 form the Kinesin motor domain; that stretch reads SISVTVRFRP…LKFASRAKSI (318 aa). Residue 178–185 coordinates ATP; it reads GVTSSGKT. 3 coiled-coil regions span residues 419 to 503, 618 to 653, and 694 to 823; these read ASRN…ILVS, PENSQTQIQNLEREIHEKQRQMRGLEQLIIESGEAS, and LQEK…LAQT. Positions 826-856 are disordered; it reads PMNGVNRKYNDGARSGRKGRISSSRSSGDEF. Positions 880–911 form a coiled coil; it reads LESALAEKEFIEDEYRKKAEEAKRREEALEND. The interval 926 to 963 is disordered; that stretch reads NGALPEPNGTDPGRELEKSQSHAVLKERQVSSAPRQPE. Basic and acidic residues predominate over residues 937–954; that stretch reads PGRELEKSQSHAVLKERQ. An RING-type zinc finger spans residues 1008 to 1043; sequence CKVCFESPTAAILLPCRHFCLCKSCSLACSECPICR.

This sequence belongs to the TRAFAC class myosin-kinesin ATPase superfamily. Kinesin family. KIN-7 subfamily.

It is found in the mitochondrion. The polypeptide is Kinesin-like protein KIN-7D, mitochondrial (Arabidopsis thaliana (Mouse-ear cress)).